A 339-amino-acid chain; its full sequence is uncharacterized protein (339 aa).

The signal sequence occupies residues methionine 1–alanine 29.

The protein belongs to the aerolysin family.

This is an uncharacterized protein from Staphylococcus aureus (strain MRSA252).